The following is a 126-amino-acid chain: Protein ApaG (126 aa).

Residues 2–126 (SDPRYQIDVS…FRLAVPGALH (125 aa)) form the ApaG domain.

This is Protein ApaG from Azotobacter vinelandii (strain DJ / ATCC BAA-1303).